The following is a 308-amino-acid chain: Bifunctional protein FolD (308 aa).

NADP(+) is bound at residue 170 to 172 (GKG).

Belongs to the tetrahydrofolate dehydrogenase/cyclohydrolase family. As to quaternary structure, homodimer.

It carries out the reaction (6R)-5,10-methylene-5,6,7,8-tetrahydrofolate + NADP(+) = (6R)-5,10-methenyltetrahydrofolate + NADPH. It catalyses the reaction (6R)-5,10-methenyltetrahydrofolate + H2O = (6R)-10-formyltetrahydrofolate + H(+). The protein operates within one-carbon metabolism; tetrahydrofolate interconversion. Catalyzes the oxidation of 5,10-methylenetetrahydrofolate to 5,10-methenyltetrahydrofolate and then the hydrolysis of 5,10-methenyltetrahydrofolate to 10-formyltetrahydrofolate. This is Bifunctional protein FolD from Pyrobaculum calidifontis (strain DSM 21063 / JCM 11548 / VA1).